A 318-amino-acid polypeptide reads, in one-letter code: UDP-N-acetylenolpyruvoylglucosamine reductase (318 aa).

Positions 38–204 (IGGVCPVIVE…LGIEILLKEG (167 aa)) constitute an FAD-binding PCMH-type domain. Arg-182 is an active-site residue. Positions 212 to 229 (SLKDKRDRRNSSQPENKK) are enriched in basic and acidic residues. The disordered stretch occupies residues 212–232 (SLKDKRDRRNSSQPENKKSAG). Ser-233 serves as the catalytic Proton donor. Glu-310 is an active-site residue.

Belongs to the MurB family. FAD is required as a cofactor.

Its subcellular location is the cytoplasm. It catalyses the reaction UDP-N-acetyl-alpha-D-muramate + NADP(+) = UDP-N-acetyl-3-O-(1-carboxyvinyl)-alpha-D-glucosamine + NADPH + H(+). It participates in cell wall biogenesis; peptidoglycan biosynthesis. Cell wall formation. The protein is UDP-N-acetylenolpyruvoylglucosamine reductase of Leptospira interrogans serogroup Icterohaemorrhagiae serovar Lai (strain 56601).